We begin with the raw amino-acid sequence, 244 residues long: Type III pantothenate kinase (244 aa).

8–15 lines the ATP pocket; sequence DQGNSACK. 94–97 is a substrate binding site; sequence GADR. D96 functions as the Proton acceptor in the catalytic mechanism. D117 is a binding site for K(+). Residue T120 participates in ATP binding. Residue T175 participates in substrate binding.

This sequence belongs to the type III pantothenate kinase family. As to quaternary structure, homodimer. Requires NH4(+) as cofactor. It depends on K(+) as a cofactor.

The protein resides in the cytoplasm. The catalysed reaction is (R)-pantothenate + ATP = (R)-4'-phosphopantothenate + ADP + H(+). Its pathway is cofactor biosynthesis; coenzyme A biosynthesis; CoA from (R)-pantothenate: step 1/5. In terms of biological role, catalyzes the phosphorylation of pantothenate (Pan), the first step in CoA biosynthesis. The chain is Type III pantothenate kinase from Porphyromonas gingivalis (strain ATCC 33277 / DSM 20709 / CIP 103683 / JCM 12257 / NCTC 11834 / 2561).